We begin with the raw amino-acid sequence, 460 residues long: MSFKFDWESLRDESFYERAKTILADALNSDSKPPIIVDDITVKDLDLGDESPFLEILEIGDMADDRFRGIFKLNYTGNASLTLTTKVQANPLNVYRQSFDQSSFVAPQFLAAGSSLAIPLNLTLSDIRLSGIIILVFSRAKGLTLVFRNDPLESIKVSSTFDAIPPLAKFLQVQIENQIRGLFRELLPGIIHRLSQKWVTRDETKSNSNTVMSPHVTQPPSPKLKPVSIMDINPDLPALSPTNMLKISALCASQRTLSLFTPSISDAVYRSNLEQFDVVDEESQFQSEDPYDIVRIQSRNYYRHNHQAPKRRTIKYKRKSKKTDEGDNASTEVTTRETTPLPTSSTPLETSTPSREVIREVKEKLLAEPSSVVMSPSEEKTTLRSIPPPLELSPPSLDLSIDTSLRPYASRNNTPEKKEKPQRPAGPSKRNTLPAPTKKGPGFFSSNLAGYDVPPPAYSG.

One can recognise an SMP-LTD domain in the interval 1–196 (MSFKFDWESL…LPGIIHRLSQ (196 aa)). The span at 304-321 (HNHQAPKRRTIKYKRKSK) shows a compositional bias: basic residues. Disordered regions lie at residues 304–356 (HNHQ…PSRE) and 368–460 (EPSS…AYSG). 2 stretches are compositionally biased toward low complexity: residues 330 to 355 (STEV…TPSR) and 393 to 405 (SPPS…DTSL).

It belongs to the MDM34 family. As to quaternary structure, component of the ER-mitochondria encounter structure (ERMES) or MDM complex, composed of MMM1, MDM10, MDM12 and MDM34.

The protein localises to the mitochondrion outer membrane. Its function is as follows. Component of the ERMES/MDM complex, which serves as a molecular tether to connect the endoplasmic reticulum (ER) and mitochondria. Components of this complex are involved in the control of mitochondrial shape and protein biogenesis, and function in nonvesicular lipid trafficking between the ER and mitochondria. MDM34 is required for the interaction of the ER-resident membrane protein MMM1 and the outer mitochondrial membrane-resident beta-barrel protein MDM10. In Yarrowia lipolytica (strain CLIB 122 / E 150) (Yeast), this protein is Mitochondrial distribution and morphology protein 34.